The primary structure comprises 833 residues: Leucine--tRNA ligase (833 aa).

Residues 41–52 (PYPSGAGLHVGH) carry the 'HIGH' region motif. The 'KMSKS' region motif lies at 610–614 (KMSKS). Lysine 613 contacts ATP.

Belongs to the class-I aminoacyl-tRNA synthetase family.

It localises to the cytoplasm. It catalyses the reaction tRNA(Leu) + L-leucine + ATP = L-leucyl-tRNA(Leu) + AMP + diphosphate. The sequence is that of Leucine--tRNA ligase from Streptococcus uberis (strain ATCC BAA-854 / 0140J).